The chain runs to 766 residues: Sucrose synthase (766 aa).

Residues methionine 220 to threonine 698 form a GT-B glycosyltransferase region.

It belongs to the glycosyltransferase 1 family. Plant sucrose synthase subfamily. Expressed most predominantly in tap root.

The catalysed reaction is an NDP-alpha-D-glucose + D-fructose = a ribonucleoside 5'-diphosphate + sucrose + H(+). Its function is as follows. Sucrose-cleaving enzyme that provides UDP-glucose and fructose for various metabolic pathways. The protein is Sucrose synthase (SS1) of Beta vulgaris (Sugar beet).